The chain runs to 213 residues: Holliday junction resolvase RecU (213 aa).

Mg(2+) is bound by residues threonine 99, aspartate 101, glutamate 114, and glutamine 133.

It belongs to the RecU family. It depends on Mg(2+) as a cofactor.

Its subcellular location is the cytoplasm. The catalysed reaction is Endonucleolytic cleavage at a junction such as a reciprocal single-stranded crossover between two homologous DNA duplexes (Holliday junction).. Endonuclease that resolves Holliday junction intermediates in genetic recombination. Cleaves mobile four-strand junctions by introducing symmetrical nicks in paired strands. Promotes annealing of linear ssDNA with homologous dsDNA. Required for DNA repair, homologous recombination and chromosome segregation. This is Holliday junction resolvase RecU from Lactococcus lactis subsp. cremoris (strain SK11).